The sequence spans 360 residues: Cinnamyl alcohol dehydrogenase 2 (360 aa).

Positions 23–351 constitute an Enoyl reductase (ER) domain; sequence GVLSPFNFSR…KADVKYRFVI (329 aa). Position 50 (Cys50) interacts with Zn(2+). Ser52 is an an alcohol binding site. Ser52 contributes to the NADP(+) binding site. Residues Asp53, His72, Glu73, Cys103, Cys106, Cys109, Cys117, and Cys166 each contribute to the Zn(2+) site. His72 contacts an alcohol. NADP(+)-binding residues include Leu192, Gly194, Leu195, Ser214, Thr215, Ser216, Lys219, Lys220, Val277, Ala279, Ser301, and Arg348.

It belongs to the zinc-containing alcohol dehydrogenase family. Class-P subfamily. In terms of assembly, homodimer. It depends on Zn(2+) as a cofactor. In terms of tissue distribution, mainly expressed in young roots and, to a lower extent, in stems and leaves.

Its subcellular location is the cytoplasm. The catalysed reaction is (E)-cinnamyl alcohol + NADP(+) = (E)-cinnamaldehyde + NADPH + H(+). Alcohol dehydrogenase that catalyzes the conversion of (E)-cinnamyl alcohol to (E)-cinnamaldehyde. This chain is Cinnamyl alcohol dehydrogenase 2, found in Rauvolfia serpentina (Serpentine wood).